The sequence spans 90 residues: Nodulation protein F (90 aa).

One can recognise a Carrier domain in the interval 4 to 89 (QLESEIIGII…RHSGSHPRLA (86 aa)). Ser-46 carries the post-translational modification O-(pantetheine 4'-phosphoryl)serine. The segment at 65–90 (RDEHGRGVVGSPERRRHSGSHPRLAH) is disordered. The span at 78–90 (RRRHSGSHPRLAH) shows a compositional bias: basic residues.

In terms of processing, 4'-phosphopantetheine is transferred from CoA to a specific serine of apo-NodF.

Functionally, proposed to synthesize nod factor fatty acyl chain. Involved in trans-2,trans-4,trans-6,cis-11-octadecatetraenoic acid biosynthesis. The sequence is that of Nodulation protein F (nodF) from Rhizobium meliloti (Ensifer meliloti).